The following is a 275-amino-acid chain: MRISPSEAAMKLSLSPPPYADAPVVVLISGLGGSGSYWLPQLAVLVQEYQVVCYDQRGTGNNPDTLAEDYSIAQMAAELHQALVAAGIERYAVVGHALGALVGMQLALDYPASVTVLVSVNGWLRINAHTRRCFQVREQLLHSGGAQAWVEAQPLFLYPADWMAARAPRLEAEDALALAHFQGKNNLLRRLNALKRADFSHHADRIRCPVQIICASDDLLVPTACSSELHAALPDSQKMVMRYGGHACNVTDPETFNALLLNGLASLLHHREAAL.

This sequence belongs to the AB hydrolase superfamily. Hydrolase RutD family.

It catalyses the reaction carbamate + 2 H(+) = NH4(+) + CO2. Involved in pyrimidine catabolism. May facilitate the hydrolysis of carbamate, a reaction that can also occur spontaneously. This is Putative carbamate hydrolase RutD from Escherichia coli (strain UTI89 / UPEC).